Reading from the N-terminus, the 86-residue chain is CLAVATA3/ESR (CLE)-related protein 7 (86 aa).

The N-terminal stretch at 1–22 is a signal peptide; the sequence is MASKALLLFVMLTFLLVIEMEG. Asn46 carries N-linked (GlcNAc...) asparagine glycosylation. The segment at 63-86 is disordered; the sequence is VDRFSPGGPDPQHHSYPLSSKPRI. 2 positions are modified to hydroxyproline: Pro68 and Pro71. Pro71 carries an O-linked (Ara...) hydroxyproline glycan.

It belongs to the CLV3/ESR signal peptide family. In terms of processing, the O-glycosylation (arabinosylation) of the hydroxyproline Pro-71 enhances binding affinity of the CLE7p peptide for its receptor. As to expression, expressed in roots and seedlings.

It is found in the secreted. The protein localises to the extracellular space. Functionally, extracellular signal peptide that regulates cell fate. This chain is CLAVATA3/ESR (CLE)-related protein 7, found in Arabidopsis thaliana (Mouse-ear cress).